We begin with the raw amino-acid sequence, 160 residues long: Cytochrome b6-f complex subunit 4 (160 aa).

Transmembrane regions (helical) follow at residues 36-56 (LLYIFPVVILGTIACNVGLAV), 95-115 (LLGVLLMVSVPAGLLTVPFLE), and 131-151 (TVFLIGTAVALWLGIGATLPI).

Belongs to the cytochrome b family. PetD subfamily. The 4 large subunits of the cytochrome b6-f complex are cytochrome b6, subunit IV (17 kDa polypeptide, petD), cytochrome f and the Rieske protein, while the 4 small subunits are petG, petL, petM and petN. The complex functions as a dimer.

It is found in the plastid. The protein resides in the chloroplast thylakoid membrane. Component of the cytochrome b6-f complex, which mediates electron transfer between photosystem II (PSII) and photosystem I (PSI), cyclic electron flow around PSI, and state transitions. In Solanum bulbocastanum (Wild potato), this protein is Cytochrome b6-f complex subunit 4.